A 431-amino-acid chain; its full sequence is MSFLVSKPERIRRWVSEKFIVEGLRDLELFGEQPPGDTRRKTNDASSESIAPFSKQEVMGSFLPEGGCYELLTVIGKGFEDLMTVNLARYKPTGEYVTVRRINLEACSNEMVTFLQGELHVSKLFNHPNIVPYRATFIADNELWVVTSFMAYGSAKDLICTHFMDGMNELAIAYILQGVLKALDYIHHMGYVHRSVKASHILISVDGKVYLSGLRSNLSMISHGQRQRVVHDFPKYSIKVLPWLSPEVLQQNLQGYDAKSDIYSVGITACELANGHVPFKDMPATQTLLEKLNGTVPCLLDTSTIPAEELTMSPSRSVANSGLSDSLTTSTPRPSNGDSPSHPYHRTFSPHFHHFVEQCLQRNPDARPSASTLLNHSFFKQIKRRASEALPELLRPVTPITNFEGSQSQDHSGIFGLVTNLEELEVDDWEF.

S2 and S46 each carry phosphoserine. The 311-residue stretch at 69 to 379 (YELLTVIGKG…ASTLLNHSFF (311 aa)) folds into the Protein kinase domain. The segment at 310 to 347 (LTMSPSRSVANSGLSDSLTTSTPRPSNGDSPSHPYHRT) is disordered. A compositionally biased stretch (polar residues) spans 312–339 (MSPSRSVANSGLSDSLTTSTPRPSNGDS). A phosphothreonine; by LKB1 mark is found at T329 and T401. The residue at position 419 (T419) is a Phosphothreonine.

It belongs to the protein kinase superfamily. STE Ser/Thr protein kinase family. STE20 subfamily. In terms of assembly, component of a trimeric complex composed of STK11/LKB1, STRAD (STRADA or STRADB) and CAB39/MO25 (CAB39/MO25alpha or CAB39L/MO25beta): the complex tethers STK11/LKB1 in the cytoplasm and stimulates its catalytic activity.

It is found in the nucleus. It localises to the cytoplasm. In terms of biological role, pseudokinase which, in complex with CAB39/MO25 (CAB39/MO25alpha or CAB39L/MO25beta), binds to and activates STK11/LKB1. Adopts a closed conformation typical of active protein kinases and binds STK11/LKB1 as a pseudosubstrate, promoting conformational change of STK11/LKB1 in an active conformation. The sequence is that of STE20-related kinase adapter protein alpha (STRADA) from Pongo abelii (Sumatran orangutan).